Here is a 58-residue protein sequence, read N- to C-terminus: Large ribosomal subunit protein bL32c (58 aa).

The protein belongs to the bacterial ribosomal protein bL32 family.

It localises to the plastid. Its subcellular location is the chloroplast. The protein is Large ribosomal subunit protein bL32c of Chaetosphaeridium globosum (Charophycean green alga).